The chain runs to 95 residues: Large ribosomal subunit protein bL25 (95 aa).

The protein belongs to the bacterial ribosomal protein bL25 family. In terms of assembly, part of the 50S ribosomal subunit; part of the 5S rRNA/L5/L18/L25 subcomplex. Contacts the 5S rRNA. Binds to the 5S rRNA independently of L5 and L18.

This is one of the proteins that binds to the 5S RNA in the ribosome where it forms part of the central protuberance. This is Large ribosomal subunit protein bL25 from Actinobacillus pleuropneumoniae serotype 5b (strain L20).